Here is a 639-residue protein sequence, read N- to C-terminus: CREB3 regulatory factor (639 aa).

The segment at 302 to 422 (PLPQEGPGSL…SVEDLKEVTS (121 aa)) is disordered. Residues 310 to 328 (SLAAGESSSLSASTSVSDS) are compositionally biased toward low complexity. A compositionally biased stretch (polar residues) spans 339–351 (LFVSDNLGEQPTK). Residues 355–370 (EEDEEDEEDVDDEDHD) are compositionally biased toward acidic residues. Positions 371–380 (EGFGSEHELS) are enriched in basic and acidic residues. Residues 381–401 (ENEEEEEEEEDYEDDKDDDIS) are compositionally biased toward acidic residues. The 64-residue stretch at 521 to 584 (TARPRSRKEK…VNRVQNPRDE (64 aa)) folds into the bZIP domain. Residues 523–532 (RPRSRKEKNK) form a basic motif region. Positions 533–540 (LASRACRL) are leucine-zipper.

Belongs to the bZIP family. CREBRF subfamily. In terms of assembly, interacts (via leucine-zipper domain) with CREB3 (via leucine-zipper domain); the interaction promotes CREB3 degradation. Post-translationally, probably degraded by the proteasome.

The protein resides in the nucleus. Functionally, acts as a negative regulator of the endoplasmic reticulum stress response or unfolded protein response (UPR). Represses the transcriptional activity of CREB3 during the UPR. Recruits CREB3 into nuclear foci. The protein is CREB3 regulatory factor (CREBRF) of Homo sapiens (Human).